The chain runs to 1382 residues: Hepatocyte growth factor receptor (1382 aa).

The signal sequence occupies residues 1-24; sequence MKAPAVLAPGILVLLFTLVPRSHG. Topologically, residues 25-933 are extracellular; sequence ECKEALVKSE…VIVQPDQNFM (909 aa). Positions 27–516 constitute a Sema domain; it reads KEALVKSEMN…TGNKITKIPL (490 aa). Residue Asn-45 is glycosylated (N-linked (GlcNAc...) asparagine). Disulfide bonds link Cys-95-Cys-101, Cys-98-Cys-160, Cys-133-Cys-141, and Cys-173-Cys-176. An N-linked (GlcNAc...) asparagine glycan is attached at Asn-106. 2 N-linked (GlcNAc...) asparagine glycosylation sites follow: Asn-203 and Asn-359. 2 cysteine pairs are disulfide-bonded: Cys-299/Cys-364 and Cys-386/Cys-398. Asn-400 and Asn-406 each carry an N-linked (GlcNAc...) asparagine glycan. Disulfide bonds link Cys-521-Cys-539, Cys-527-Cys-562, Cys-530-Cys-546, and Cys-542-Cys-552. IPT/TIG domains lie at 564 to 656, 658 to 740, and 743 to 837; these read PAIY…FSYV, PVIT…FSYR, and PIVD…LTYV. An O-linked (Man) threonine glycan is attached at Thr-583. Residues Asn-608, Asn-614, and Asn-636 are each glycosylated (N-linked (GlcNAc...) asparagine). O-linked (Man) threonine glycans are attached at residues Thr-677 and Thr-762. N-linked (GlcNAc...) asparagine glycans are attached at residues Asn-786 and Asn-880. The helical transmembrane segment at 934–956 threads the bilayer; it reads GLIVGGVSISIILLLLLGLFLWL. At 957-1382 the chain is on the cytoplasmic side; it reads KKKKRIKDLG…QDNVDGTVDT (426 aa). Ser-967 is modified (phosphoserine). Phosphothreonine is present on Thr-978. Residues Ser-991, Ser-998, and Ser-1001 each carry the phosphoserine modification. Tyr-1004 is subject to Phosphotyrosine. The 268-residue stretch at 1079–1346 folds into the Protein kinase domain; that stretch reads VHFSEVIGRG…RISTIFSTFI (268 aa). ATP is bound by residues 1085–1093 and Lys-1111; that span reads IGRGHFGCV. Residue Asp-1205 is the Proton acceptor of the active site. Positions 1213 to 1382 are interaction with RANBP9; that stretch reads LDEKFTVKVA…QDNVDGTVDT (170 aa). Tyr-1231 bears the Phosphotyrosine mark. A phosphotyrosine; by autocatalysis mark is found at Tyr-1235 and Tyr-1236. The residue at position 1290 (Thr-1290) is a Phosphothreonine. Residues 1321–1360 are interaction with MUC20; it reads WHPKAEMRPSFSELVSRISTIFSTFIGEHYVHVNATYVNV. A phosphotyrosine; by autocatalysis mark is found at Tyr-1350 and Tyr-1357. The residue at position 1366 (Tyr-1366) is a Phosphotyrosine.

The protein belongs to the protein kinase superfamily. Tyr protein kinase family. Heterodimer made of an alpha chain (50 kDa) and a beta chain (145 kDa) which are disulfide linked. Binds PLXNB1. Interacts when phosphorylated with downstream effectors including STAT3, PIK3R1, SRC, PCLG1, GRB2 and GAB1. Interacts with SPSB1, SPSB2 and SPSB4. Interacts with INPP5D/SHIP1. When phosphorylated at Tyr-1357, interacts with INPPL1/SHIP2. Interacts with RANBP9 and RANBP10, as well as SPSB1, SPSB2, SPSB3 and SPSB4. SPSB1 binding occurs in the presence and in the absence of HGF, however HGF treatment has a positive effect on this interaction. Interacts with MUC20; prevents interaction with GRB2 and suppresses hepatocyte growth factor-induced cell proliferation. Interacts with GRB10. Interacts with PTPN1 and PTPN2. Interacts with HSP90AA1 and HSP90AB1; the interaction suppresses MET kinase activity. Interacts with tensin TNS3. Interacts (when phosphorylated) with tensin TNS4 (via SH2 domain); the interaction increases MET protein stability by inhibiting MET endocytosis and subsequent lysosomal degradation. In terms of processing, autophosphorylated in response to ligand binding on Tyr-1235 and Tyr-1236 in the kinase domain leading to further phosphorylation of Tyr-1350 and Tyr-1357 in the C-terminal multifunctional docking site. Dephosphorylated by PTPRJ at Tyr-1350 and Tyr-1366. Dephosphorylated by PTPN1 and PTPN2. Post-translationally, ubiquitinated. Ubiquitination by CBL regulates the receptor stability and activity through proteasomal degradation. O-mannosylation of IPT/TIG domains by TMEM260 is required for protein maturation. O-mannosylated residues are composed of single mannose glycans that are not elongated or modified.

The protein localises to the membrane. It catalyses the reaction L-tyrosyl-[protein] + ATP = O-phospho-L-tyrosyl-[protein] + ADP + H(+). With respect to regulation, in its inactive state, the C-terminal tail interacts with the catalytic domain and inhibits the kinase activity. Upon ligand binding, the C-terminal tail is displaced and becomes phosphorylated, thus increasing the kinase activity. Receptor tyrosine kinase that transduces signals from the extracellular matrix into the cytoplasm by binding to hepatocyte growth factor/HGF ligand. Regulates many physiological processes including proliferation, scattering, morphogenesis and survival. Ligand binding at the cell surface induces autophosphorylation of MET on its intracellular domain that provides docking sites for downstream signaling molecules. Following activation by ligand, interacts with the PI3-kinase subunit PIK3R1, PLCG1, SRC, GRB2, STAT3 or the adapter GAB1. Recruitment of these downstream effectors by MET leads to the activation of several signaling cascades including the RAS-ERK, PI3 kinase-AKT, or PLCgamma-PKC. The RAS-ERK activation is associated with the morphogenetic effects while PI3K/AKT coordinates prosurvival effects. During embryonic development, MET signaling plays a role in gastrulation, development and migration of muscles and neuronal precursors, angiogenesis and kidney formation. In adults, participates in wound healing as well as organ regeneration and tissue remodeling. Also promotes differentiation and proliferation of hematopoietic cells. This Oryctolagus cuniculus (Rabbit) protein is Hepatocyte growth factor receptor (MET).